The chain runs to 177 residues: Large ribosomal subunit protein uL6 (177 aa).

This sequence belongs to the universal ribosomal protein uL6 family. As to quaternary structure, part of the 50S ribosomal subunit.

This protein binds to the 23S rRNA, and is important in its secondary structure. It is located near the subunit interface in the base of the L7/L12 stalk, and near the tRNA binding site of the peptidyltransferase center. In Rickettsia africae (strain ESF-5), this protein is Large ribosomal subunit protein uL6.